A 343-amino-acid chain; its full sequence is Probable dual-specificity RNA methyltransferase RlmN (343 aa).

E91 acts as the Proton acceptor in catalysis. One can recognise a Radical SAM core domain in the interval 97 to 326 (HPGRITACIS…AEIRQEKGSD (230 aa)). C104 and C331 form a disulfide bridge. [4Fe-4S] cluster contacts are provided by C111, C115, and C118. Residues 158-159 (GE), S190, 213-215 (SLH), and N289 contribute to the S-adenosyl-L-methionine site. The active-site S-methylcysteine intermediate is C331.

Belongs to the radical SAM superfamily. RlmN family. The cofactor is [4Fe-4S] cluster.

The protein resides in the cytoplasm. It catalyses the reaction adenosine(2503) in 23S rRNA + 2 reduced [2Fe-2S]-[ferredoxin] + 2 S-adenosyl-L-methionine = 2-methyladenosine(2503) in 23S rRNA + 5'-deoxyadenosine + L-methionine + 2 oxidized [2Fe-2S]-[ferredoxin] + S-adenosyl-L-homocysteine. It carries out the reaction adenosine(37) in tRNA + 2 reduced [2Fe-2S]-[ferredoxin] + 2 S-adenosyl-L-methionine = 2-methyladenosine(37) in tRNA + 5'-deoxyadenosine + L-methionine + 2 oxidized [2Fe-2S]-[ferredoxin] + S-adenosyl-L-homocysteine. Its function is as follows. Specifically methylates position 2 of adenine 2503 in 23S rRNA and position 2 of adenine 37 in tRNAs. This chain is Probable dual-specificity RNA methyltransferase RlmN, found in Thermotoga neapolitana (strain ATCC 49049 / DSM 4359 / NBRC 107923 / NS-E).